The following is a 469-amino-acid chain: Cytochrome P450 85A1 (469 aa).

A helical membrane pass occupies residues methionine 1–leucine 21. Heme is bound at residue cysteine 419.

It belongs to the cytochrome P450 family. Heme is required as a cofactor. Expressed at low levels in all the tissues, but preferentially in the leaf sheath.

The protein resides in the membrane. The catalysed reaction is 6-deoxoteasterone + reduced [NADPH--hemoprotein reductase] + O2 = 6alpha-hydroxyteasterone + oxidized [NADPH--hemoprotein reductase] + H2O + H(+). It carries out the reaction 6alpha-hydroxytyphasterol + reduced [NADPH--hemoprotein reductase] + O2 = teasterone + oxidized [NADPH--hemoprotein reductase] + 2 H2O + H(+). It catalyses the reaction 3-dehydro-6-deoxoteasterone + reduced [NADPH--hemoprotein reductase] + O2 = 3-dehydro-6alpha-hydroxyteasterone + oxidized [NADPH--hemoprotein reductase] + H2O + H(+). The enzyme catalyses 3-dehydro-6alpha-hydroxyteasterone + reduced [NADPH--hemoprotein reductase] + O2 = 3-dehydroteasterone + oxidized [NADPH--hemoprotein reductase] + 2 H2O + H(+). The catalysed reaction is 6-deoxotyphasterol + reduced [NADPH--hemoprotein reductase] + O2 = 6alpha-hydroxytyphasterol + oxidized [NADPH--hemoprotein reductase] + H2O + H(+). It carries out the reaction 6alpha-hydroxytyphasterol + reduced [NADPH--hemoprotein reductase] + O2 = typhasterol + oxidized [NADPH--hemoprotein reductase] + 2 H2O + H(+). It catalyses the reaction 3-dehydro-6-deoxoteasterone + 2 reduced [NADPH--hemoprotein reductase] + 2 O2 = 3-dehydroteasterone + 2 oxidized [NADPH--hemoprotein reductase] + 3 H2O + 2 H(+). The enzyme catalyses 6-deoxoteasterone + 2 reduced [NADPH--hemoprotein reductase] + 2 O2 = teasterone + 2 oxidized [NADPH--hemoprotein reductase] + 3 H2O + 2 H(+). The catalysed reaction is 6-deoxotyphasterol + 2 reduced [NADPH--hemoprotein reductase] + 2 O2 = typhasterol + 2 oxidized [NADPH--hemoprotein reductase] + 3 H2O + 2 H(+). The protein operates within plant hormone biosynthesis; brassinosteroid biosynthesis. In terms of biological role, catalyzes the C6-oxidation step in brassinosteroids biosynthesis. May convert 6-deoxoteasterone (6-deoxoTE) to teasterone (TE), 3-dehydro-6-deoxoteasterone (6-deoxo3DT, 6-deoxo3DHT) to 3-dehydroteasterone (3DT, 3-DHT), and 6-deoxotyphasterol (6-deoxoTY) to typhasterol (TY). Involved in the organization and elongation of the leaf and stem cells. Not able to convert 6-deoxocastasterone (6-deoxoCS) and castasterone (CS) to brassinolide (BL). This chain is Cytochrome P450 85A1, found in Oryza sativa subsp. japonica (Rice).